We begin with the raw amino-acid sequence, 1782 residues long: AF4/FMR2 family member lilli (1782 aa).

Disordered stretches follow at residues 42 to 84 (NMED…PSEG), 150 to 313 (ASSS…PPPE), 434 to 515 (MPTP…QQQQ), 605 to 637 (GGSS…NLSR), 691 to 732 (EKLH…QQRY), 768 to 820 (GALP…LQIP), 839 to 891 (KVQP…SNKK), 911 to 1064 (VAAA…AAAS), 1091 to 1126 (AGNS…QHKQ), 1166 to 1234 (LPQS…KQGQ), 1296 to 1327 (ARQH…TPKD), 1386 to 1420 (LKQE…EQLS), 1450 to 1484 (QESA…QQQQ), and 1674 to 1701 (GNTP…GKIV). The span at 54–80 (REKYERQQGIQSDDRETSLFGEPRRLN) shows a compositional bias: basic and acidic residues. Low complexity-rich tracts occupy residues 164–180 (QQQQ…QQQQ) and 211–260 (PSSS…MSSP). A compositionally biased stretch (pro residues) spans 435-447 (PTPPKASPTPPAI). T443 is modified (phosphothreonine). Basic and acidic residues predominate over residues 450–463 (MKTEKNHSLEKQDS). The span at 465–475 (LENDLELSESD) shows a compositional bias: acidic residues. Residues S472 and S474 each carry the phosphoserine modification. Composition is skewed to low complexity over residues 484–515 (SAGN…QQQQ) and 609–622 (GSCM…SSSN). Residues 623–634 (KTPSPTDSNRWN) are compositionally biased toward polar residues. The segment covering 691–701 (EKLHDEPRHVG) has biased composition (basic and acidic residues). Composition is skewed to low complexity over residues 714 to 730 (QQQQ…QQQQ) and 782 to 805 (SDSG…GGSS). The span at 859–869 (PRQKKPRKKKM) shows a compositional bias: basic residues. A phosphoserine mark is found at S878 and S879. A DNA-binding region (a.T hook) is located at residues 920–932 (KKGRGRPRKQAQQ). Residues 929–972 (QAQQQQQQQQQQLQQSGNLSSASASSSQAKGPTLTAAKKPLAKA) are compositionally biased toward low complexity. Phosphoserine occurs at positions 949 and 951. Over residues 973–982 (SVSNSNSTAP) the composition is skewed to polar residues. Composition is skewed to low complexity over residues 996–1018 (SNSS…TMAA), 1033–1064 (SSSS…AAAS), 1105–1116 (SVGSSSNSSSSS), and 1174–1196 (SSSD…SSSS). Residues 1308–1318 (AQQNGHLSSRS) are compositionally biased toward polar residues. The segment covering 1450 to 1460 (QESAANGSPNK) has biased composition (polar residues). A Phosphoserine modification is found at S1457. Low complexity-rich tracts occupy residues 1461–1484 (LQQQ…QQQQ) and 1674–1694 (GNTP…SGSN).

The protein belongs to the AF4 family.

Its subcellular location is the nucleus. In terms of biological role, has a role in transcriptional regulation. Acts in parallel with the Ras/MAPK and the PI3K/PKB pathways in the control of cell identity and cellular growth. Essential for regulation of the cytoskeleton and cell growth but not for cell proliferation or growth rate. Required specifically for the microtubule-based basal transport of lipid droplets. Plays a partially redundant function downstream of Raf in cell fate specification in the developing eye. Pair-rule protein that regulates embryonic cellularization, gastrulation and segmentation. This chain is AF4/FMR2 family member lilli, found in Drosophila mojavensis (Fruit fly).